We begin with the raw amino-acid sequence, 560 residues long: Choline/ethanolamine transporter FLVCR1 (560 aa).

The segment at 1 to 22 (MVKLNDEEGAAMAPGHQPTNGY) is disordered. Over 1-99 (MVKLNDEEGA…TPGTEGSPAP (99 aa)) the chain is Cytoplasmic. At S56 the chain carries Phosphoserine. The disordered stretch occupies residues 68 to 99 (QTPLAPEEETQTRLLPTGPGEETPGTEGSPAP). A compositionally biased stretch (low complexity) spans 83-95 (PTGPGEETPGTEG). The chain crosses the membrane as a helical span at residues 100-124 (QTALSARRFVVLLIFSLYSLVNAFQ). Over 125 to 142 (WIQYSVISNVFEGFYGVS) the chain is Extracellular. The chain crosses the membrane as a helical span at residues 143–170 (SLHIDWLSMVYMLAYVPLIFPATWLLDT). At 171-172 (RG) the chain is on the cytoplasmic side. A helical transmembrane segment spans residues 173–192 (LRLTALLGSGLNCLGAWVKC). The Extracellular segment spans residues 193–199 (ASVQQHL). The chain crosses the membrane as a helical span at residues 200 to 228 (FWVTMLGQCLCSVAQVFILGLPSRIASVW). Q214 contributes to the ethanolamine binding site. At 229–233 (FGPKE) the chain is on the cytoplasmic side. A helical transmembrane segment spans residues 234-259 (VSTACATAVLGNQLGAAIGFLLPPVL). Topologically, residues 260–265 (VPNTQN) are extracellular. An N-linked (GlcNAc...) asparagine glycan is attached at N265. A helical transmembrane segment spans residues 266 to 295 (NTDLLACNISTMFYGTSSVATFLCFLTIIA). Over 296 to 331 (FKEKPQYPPSQAQAALQNSPPAKYSYKKSIRNLFRN) the chain is Cytoplasmic. The helical transmembrane segment at 332–362 (VPFVLLLITYGIITGAFYSVSTLLNQMILTY) threads the bilayer. The Extracellular portion of the chain corresponds to 363 to 366 (YKGE). Residues 367–395 (EVSAGKIGLTLVVAGMVGSILCGFWLDYT) traverse the membrane as a helical segment. The Cytoplasmic segment spans residues 396 to 397 (KI). A helical transmembrane segment spans residues 398–420 (YKQTTLIVYILSFLGMVIFTFTL). Topologically, residues 421–423 (DLG) are extracellular. A helical transmembrane segment spans residues 424–453 (YGIVVFVTGGVLGFFMTGYLPLGFEFAVEI). Topologically, residues 454–461 (TYPESEGT) are cytoplasmic. The chain crosses the membrane as a helical span at residues 462–487 (SSGLLNAAAQIFGILFTLAQGKLTTD). Residue Q471 participates in ethanolamine binding. Q471 lines the choline pocket. Residues 488–489 (YS) lie on the Extracellular side of the membrane. Residues 490–512 (PKAGNIFLCVWLFLGIILTALIK) form a helical membrane-spanning segment. Residues 513–560 (SDLRRHNINIGIANGDIKAVPVEDTVEDSPTDKESKTIVMSKQSESAI) are Cytoplasmic-facing. The disordered stretch occupies residues 537–560 (TVEDSPTDKESKTIVMSKQSESAI). S541 is subject to Phosphoserine. Polar residues predominate over residues 550 to 560 (IVMSKQSESAI).

It belongs to the major facilitator superfamily. Feline leukemia virus subgroup C receptor (TC 2.A.1.28.1) family.

It localises to the cell membrane. It carries out the reaction choline(out) = choline(in). The catalysed reaction is ethanolamine(in) = ethanolamine(out). The enzyme catalyses heme b(in) = heme b(out). Its function is as follows. Uniporter that mediates the transport of extracellular choline and ethanolamine into cells, thereby playing a key role in phospholipid biosynthesis. Choline and ethanolamine are the precursors of phosphatidylcholine and phosphatidylethanolamine, respectively, the two most abundant phospholipids. Transport is not coupled with proton transport and is exclusively driven by the choline (or ethanolamine) gradient across the plasma membrane. Also acts as a heme b transporter that mediates heme efflux from the cytoplasm to the extracellular compartment. In terms of biological role, (Microbial infection) Confers susceptibility to Feline leukemia virus subgroup C (FeLV-C) infection, which is associated with fatal erythroid aplasia, also known as aplastic anemia. In Felis catus (Cat), this protein is Choline/ethanolamine transporter FLVCR1 (FLVCR1).